A 959-amino-acid polypeptide reads, in one-letter code: DEAD-box ATP-dependent RNA helicase rde-12 (959 aa).

A disordered region spans residues 1-336; the sequence is MSSFGNNAGG…EGVNAPVRAP (336 aa). Positions 71 to 97 are enriched in basic and acidic residues; the sequence is GRREDDRSHSRDNHGGSRYGERDDRGN. A compositionally biased stretch (polar residues) spans 98 to 118; it reads NGRSADNRYSQSNYNYDSNRG. Basic and acidic residues predominate over residues 122-134; that stretch reads YQRDNHGSKDDRG. Residues 137–160 are compositionally biased toward polar residues; sequence NQYNDHGSNHNSNSRNDQYRQGSY. Basic and acidic residues-rich tracts occupy residues 166-181 and 189-201; these read SGYRRDDDRRRNDNDQ and RDSDRNSPRDHHN. Residues 202 to 213 are compositionally biased toward polar residues; it reads YNSQSSPRSHQG. Basic and acidic residues-rich tracts occupy residues 219–239 and 255–270; these read SAPKEDNQRRYDNHQGGHDSY and YRNDYRSQQDSRDHRS. Low complexity predominate over residues 271–280; it reads GGNNSSSGFK. Residues 281-301 show a composition bias toward gly residues; sequence NDGGFGGNDNRGFGNNGGGSF. The segment covering 302–317 has biased composition (low complexity); it reads GNPNNSYRGNSNNIGG. A Q motif motif is present at residues 380–408; it reads TSWTNSGLHPTILETLKRIKYNNVRTIQG. Residues 411–599 form the Helicase ATP-binding domain; sequence IPQVLDGHDV…NELMKRLPGQ (189 aa). 424–431 serves as a coordination point for ATP; that stretch reads AETSAGKT. A DEAD box motif is present at residues 539–542; sequence DEAD. A Helicase C-terminal domain is found at 632–792; that stretch reads KLREILKQNV…KVPDFLDAMA (161 aa). 2 disordered regions span residues 793-834 and 858-959; these read KSSR…GGGR and GGGG…DDEW. Gly residues-rich tracts occupy residues 800–834 and 858–872; these read GTSGFGQRGGYGGRGGGFGGTGRGRGGGVFGGGGR and GGGGFGGVKPSGFGG. Polar residues predominate over residues 930-941; it reads TLGSSTFGTANN. Residues 942–959 show a composition bias toward acidic residues; sequence ADEEPTETGADGNDDDEW.

It belongs to the DEAD box helicase family. DDX3/DED1 subfamily. In terms of assembly, interacts with wago-1, ergo-1 and rde-1. It depends on Mg(2+) as a cofactor. Expressed in the soma and germline.

It localises to the cytoplasm. The protein localises to the perinuclear region. The protein resides in the cytoplasmic granule. It is found in the P-body. The catalysed reaction is ATP + H2O = ADP + phosphate + H(+). Probable ATP-dependent RNA helicase involved in RNAi-mediated gene silencing. Specifically required in the endogenous siRNA pathway for biogenesis of secondary endogenous small interfering RNA (siRNA) intermediates called 22G-RNAs. May associate with and recruit rde-10 to primary siRNA-targeted mRNA for secondary siRNA synthesis. May be recruited to target mRNAs by rde-1 and/or ergo-1. This is DEAD-box ATP-dependent RNA helicase rde-12 from Caenorhabditis elegans.